A 705-amino-acid polypeptide reads, in one-letter code: Effector protein AvrPphDPsv (705 aa).

Over residues 1–15 (MNPLQSIQHNITTPP) the composition is skewed to polar residues. Disordered regions lie at residues 1-40 (MNPLQSIQHNITTPPISGGQPLDAVGPQAQKSHPKRISPS) and 175-205 (RLETSLLSSPDHSRPPSQPKPVHLGSVRRES).

It localises to the secreted. Its function is as follows. Effector protein involved in non-host recognition. In Pseudomonas savastanoi (Pseudomonas syringae pv. savastanoi), this protein is Effector protein AvrPphDPsv (avrPphDPsv).